A 55-amino-acid chain; its full sequence is ATP synthase F(0) complex subunit 8 (55 aa).

The chain crosses the membrane as a helical span at residues 4 to 24 (LNPAPWFTILVFSWMIFLAII). The span at 32–41 (TSPNDSSPLS) shows a compositional bias: polar residues. Residues 32 to 55 (TSPNDSSPLSTEKHKTESWDWPWQ) are disordered.

This sequence belongs to the ATPase protein 8 family. As to quaternary structure, component of the ATP synthase complex composed at least of ATP5F1A/subunit alpha, ATP5F1B/subunit beta, ATP5MC1/subunit c (homooctomer), MT-ATP6/subunit a, MT-ATP8/subunit 8, ATP5ME/subunit e, ATP5MF/subunit f, ATP5MG/subunit g, ATP5MK/subunit k, ATP5MJ/subunit j, ATP5F1C/subunit gamma, ATP5F1D/subunit delta, ATP5F1E/subunit epsilon, ATP5PF/subunit F6, ATP5PB/subunit b, ATP5PD/subunit d, ATP5PO/subunit OSCP. ATP synthase complex consists of a soluble F(1) head domain (subunits alpha(3) and beta(3)) - the catalytic core - and a membrane F(0) domain - the membrane proton channel (subunits c, a, 8, e, f, g, k and j). These two domains are linked by a central stalk (subunits gamma, delta, and epsilon) rotating inside the F1 region and a stationary peripheral stalk (subunits F6, b, d, and OSCP).

The protein localises to the mitochondrion membrane. In terms of biological role, subunit 8, of the mitochondrial membrane ATP synthase complex (F(1)F(0) ATP synthase or Complex V) that produces ATP from ADP in the presence of a proton gradient across the membrane which is generated by electron transport complexes of the respiratory chain. ATP synthase complex consist of a soluble F(1) head domain - the catalytic core - and a membrane F(1) domain - the membrane proton channel. These two domains are linked by a central stalk rotating inside the F(1) region and a stationary peripheral stalk. During catalysis, ATP synthesis in the catalytic domain of F(1) is coupled via a rotary mechanism of the central stalk subunits to proton translocation. In vivo, can only synthesize ATP although its ATP hydrolase activity can be activated artificially in vitro. Part of the complex F(0) domain. This Formosania lacustris (Oriental stream loach) protein is ATP synthase F(0) complex subunit 8.